Consider the following 91-residue polypeptide: UPF0335 protein BBta_6866 (91 aa).

The protein belongs to the UPF0335 family.

The sequence is that of UPF0335 protein BBta_6866 from Bradyrhizobium sp. (strain BTAi1 / ATCC BAA-1182).